We begin with the raw amino-acid sequence, 111 residues long: X antigen family member 2 (111 aa).

Disordered regions lie at residues 1 to 61 and 77 to 111; these read MSWR…AAEI and KTGD…KSQV. Residues 86-111 show a composition bias toward basic and acidic residues; the sequence is TDVKGKILPKAEHFKMPEAGEGKSQV.

The protein belongs to the GAGE family.

The chain is X antigen family member 2 (XAGE2) from Homo sapiens (Human).